Reading from the N-terminus, the 124-residue chain is Fluoride-specific ion channel FluC (124 aa).

A run of 4 helical transmembrane segments spans residues 4–24, 36–56, 63–83, and 100–120; these read YLVI…TGVY, GTLI…ILFL, PLWR…LSSI, and LLNI…GIVL. Na(+) is bound by residues glycine 75 and threonine 78.

The protein belongs to the fluoride channel Fluc/FEX (TC 1.A.43) family.

Its subcellular location is the cell inner membrane. The catalysed reaction is fluoride(in) = fluoride(out). With respect to regulation, na(+) is not transported, but it plays an essential structural role and its presence is essential for fluoride channel function. In terms of biological role, fluoride-specific ion channel. Important for reducing fluoride concentration in the cell, thus reducing its toxicity. The protein is Fluoride-specific ion channel FluC of Sulfurihydrogenibium sp. (strain YO3AOP1).